The following is a 366-amino-acid chain: UDP-N-acetylenolpyruvoylglucosamine reductase (366 aa).

The region spanning 29–203 is the FAD-binding PCMH-type domain; that stretch reads VGPVARTLVT…LEVEFALDAS (175 aa). Arg-177 is an active-site residue. Catalysis depends on Ser-258, which acts as the Proton donor. Glu-358 is an active-site residue.

This sequence belongs to the MurB family. FAD serves as cofactor.

The protein localises to the cytoplasm. The catalysed reaction is UDP-N-acetyl-alpha-D-muramate + NADP(+) = UDP-N-acetyl-3-O-(1-carboxyvinyl)-alpha-D-glucosamine + NADPH + H(+). It participates in cell wall biogenesis; peptidoglycan biosynthesis. In terms of biological role, cell wall formation. This chain is UDP-N-acetylenolpyruvoylglucosamine reductase, found in Mycobacterium marinum (strain ATCC BAA-535 / M).